The primary structure comprises 716 residues: Phosphoribosylformylglycinamidine synthase subunit PurL (716 aa).

Histidine 33 is an active-site residue. Tyrosine 36 serves as a coordination point for ATP. Glutamate 77 provides a ligand contact to Mg(2+). Residues serine 78–histidine 81 and arginine 100 contribute to the substrate site. Histidine 79 serves as the catalytic Proton acceptor. Position 101 (aspartate 101) interacts with Mg(2+). A substrate-binding site is contributed by glutamine 225. Aspartate 253 is a Mg(2+) binding site. Position 297 to 299 (glutamate 297 to glutamine 299) interacts with substrate. Asparagine 475 and glycine 512 together coordinate ATP. Residue asparagine 513 participates in Mg(2+) binding. Serine 515 is a binding site for substrate.

The protein belongs to the FGAMS family. Monomer. Part of the FGAM synthase complex composed of 1 PurL, 1 PurQ and 2 PurS subunits.

The protein resides in the cytoplasm. It catalyses the reaction N(2)-formyl-N(1)-(5-phospho-beta-D-ribosyl)glycinamide + L-glutamine + ATP + H2O = 2-formamido-N(1)-(5-O-phospho-beta-D-ribosyl)acetamidine + L-glutamate + ADP + phosphate + H(+). It participates in purine metabolism; IMP biosynthesis via de novo pathway; 5-amino-1-(5-phospho-D-ribosyl)imidazole from N(2)-formyl-N(1)-(5-phospho-D-ribosyl)glycinamide: step 1/2. Its function is as follows. Part of the phosphoribosylformylglycinamidine synthase complex involved in the purines biosynthetic pathway. Catalyzes the ATP-dependent conversion of formylglycinamide ribonucleotide (FGAR) and glutamine to yield formylglycinamidine ribonucleotide (FGAM) and glutamate. The FGAM synthase complex is composed of three subunits. PurQ produces an ammonia molecule by converting glutamine to glutamate. PurL transfers the ammonia molecule to FGAR to form FGAM in an ATP-dependent manner. PurS interacts with PurQ and PurL and is thought to assist in the transfer of the ammonia molecule from PurQ to PurL. This Methanosarcina mazei (strain ATCC BAA-159 / DSM 3647 / Goe1 / Go1 / JCM 11833 / OCM 88) (Methanosarcina frisia) protein is Phosphoribosylformylglycinamidine synthase subunit PurL.